A 231-amino-acid chain; its full sequence is (S)-2-haloacid dehalogenase 4A (231 aa).

Asp11 serves as the catalytic Nucleophile. An (S)-2-haloacid-binding positions include 12–13 (AY), Arg42, and 119–120 (SN). An important for catalytic activity region spans residues 176–181 (SSNAWD).

The protein belongs to the HAD-like hydrolase superfamily. S-2-haloalkanoic acid dehalogenase family.

It carries out the reaction an (S)-2-haloacid + H2O = a (2R)-2-hydroxycarboxylate + a halide anion + H(+). The enzyme catalyses (S)-2-chloropropanoate + H2O = (R)-lactate + chloride + H(+). Its function is as follows. Catalyzes the hydrolytic dehalogenation of small (S)-2-haloalkanoic acids to yield the corresponding (R)-2-hydroxyalkanoic acids. Acts on acids of short chain lengths, C(2) to C(4), with inversion of configuration at C-3. Active with 2-halogenated carboxylic acids and converts only the S-isomer (or L-isomer) of 2-chloropropionic acid with inversion of configuration to produce R-lactate (or D-isomer). This is (S)-2-haloacid dehalogenase 4A from Burkholderia cepacia (Pseudomonas cepacia).